Consider the following 302-residue polypeptide: Dihydroorotate dehydrogenase B (NAD(+)), catalytic subunit (302 aa).

Residues Ser23 and 47 to 48 (KG) each bind FMN. Residues Lys47 and 71 to 75 (NSVGL) each bind substrate. Residues Asn101 and Asn128 each coordinate FMN. Substrate is bound at residue Asn128. Cys131 functions as the Nucleophile in the catalytic mechanism. Residues Lys166 and Ile192 each coordinate FMN. 193 to 194 (NT) serves as a coordination point for substrate. FMN-binding positions include Gly218, 244–245 (GG), and 266–267 (GT).

Belongs to the dihydroorotate dehydrogenase family. Type 1 subfamily. Heterotetramer of 2 PyrK and 2 PyrD type B subunits. Requires FMN as cofactor.

The protein localises to the cytoplasm. The enzyme catalyses (S)-dihydroorotate + NAD(+) = orotate + NADH + H(+). Its pathway is pyrimidine metabolism; UMP biosynthesis via de novo pathway; orotate from (S)-dihydroorotate (NAD(+) route): step 1/1. Catalyzes the conversion of dihydroorotate to orotate with NAD(+) as electron acceptor. The chain is Dihydroorotate dehydrogenase B (NAD(+)), catalytic subunit (pyrD) from Alkaliphilus metalliredigens (strain QYMF).